The primary structure comprises 424 residues: Serine/threonine-protein kinase H1 (424 aa).

Gly2 carries the N-myristoyl glycine lipid modification. Cys3 carries the S-palmitoyl cysteine lipid modification. The segment at Lys49–Ala81 is disordered. The segment covering Gln57 to Glu72 has biased composition (polar residues). The Protein kinase domain occupies Tyr98–Val355. ATP contacts are provided by residues Ile104–Val112 and Lys127. Asp218 acts as the Proton acceptor in catalysis. The segment at Arg378 to Arg407 is disordered. Ser380 and Ser381 each carry phosphoserine; by autocatalysis. Residues Ser385–Thr398 show a composition bias toward low complexity.

This sequence belongs to the protein kinase superfamily. CAMK Ser/Thr protein kinase family. Homodimer. Autophosphorylated on serine residues. Post-translationally, myristoylated. Required for membrane association. Prerequisite for palmitoylation to occur. In terms of processing, palmitoylated.

The protein localises to the golgi apparatus. It is found in the cytoplasm. The protein resides in the cytoskeleton. Its subcellular location is the microtubule organizing center. It localises to the centrosome. The protein localises to the nucleus speckle. It is found in the endoplasmic reticulum membrane. The protein resides in the cell membrane. It carries out the reaction L-seryl-[protein] + ATP = O-phospho-L-seryl-[protein] + ADP + H(+). The enzyme catalyses L-threonyl-[protein] + ATP = O-phospho-L-threonyl-[protein] + ADP + H(+). Activity depends on Ca(2+) concentration. May be a SFC-associated serine kinase (splicing factor compartment-associated serine kinase) with a role in intranuclear SR protein (non-snRNP splicing factors containing a serine/arginine-rich domain) trafficking and pre-mRNA processing. This is Serine/threonine-protein kinase H1 (PSKH1) from Bos taurus (Bovine).